Here is a 159-residue protein sequence, read N- to C-terminus: Ribosomal RNA large subunit methyltransferase H (159 aa).

Residues L76, G108, and 127–132 (FSKMTF) contribute to the S-adenosyl-L-methionine site.

This sequence belongs to the RNA methyltransferase RlmH family. In terms of assembly, homodimer.

The protein resides in the cytoplasm. It carries out the reaction pseudouridine(1915) in 23S rRNA + S-adenosyl-L-methionine = N(3)-methylpseudouridine(1915) in 23S rRNA + S-adenosyl-L-homocysteine + H(+). Specifically methylates the pseudouridine at position 1915 (m3Psi1915) in 23S rRNA. The chain is Ribosomal RNA large subunit methyltransferase H from Clostridium botulinum (strain Kyoto / Type A2).